A 343-amino-acid polypeptide reads, in one-letter code: 4-hydroxyproline 2-epimerase 1 (343 aa).

Ser90 serves as the catalytic Proton acceptor. Substrate-binding positions include 91-92 (GS), Asp251, and 256-257 (GT).

The protein belongs to the proline racemase family.

It carries out the reaction trans-4-hydroxy-L-proline = cis-4-hydroxy-D-proline. In terms of biological role, catalyzes the epimerization of trans-4-hydroxy-L-proline (t4LHyp) to cis-4-hydroxy-D-proline (c4DHyp) in vitro, albeit with low efficiency. The physiological substrate may be different. Displays no proline racemase activity. The polypeptide is 4-hydroxyproline 2-epimerase 1 (Brucella anthropi (strain ATCC 49188 / DSM 6882 / CCUG 24695 / JCM 21032 / LMG 3331 / NBRC 15819 / NCTC 12168 / Alc 37) (Ochrobactrum anthropi)).